The chain runs to 546 residues: MAAKDVVFGGEARARMVEGVNILANAVKVTLGPKGRNVVLERSFGAPTVTKDGVSVAKEIELKDKLQNMGAQLVKEVASKTNDIAGDGTTTATVLAQAIVREGSKYVAAGLNPMDLKRGIDKAVVALVEELKKASKATTTSKEIAQVGSISANSDESVGKIIADAMDKVGKEGVITVEDGKSLENELDVVEGMQFDRGYLSPYFINNPEKQSAILDNPFVLLFDKKISNIRDLLPTLEQVAKASRPLLIIAEEVDGEALATLVVNTIRGILKVVAVKAPGFGDRRKAMLEDIAILTGGKVIAEEVGLTLEKVTLADLGQAKRIEVGKENTTIIDGAGAAADIEARVKQIRIQIEEATSDYDREKLQERVAKLAGGVAVIKVGAATEVEMKEKKARVEDALHATRAAVEEGIVAGGGVALLRAKQAVGNLSTGNPEQDAGIKLVLKAVEAPLREIVANAGGEPSVVVNEVLNGKGNYGFNAANDTYGDMLEMGILDPTKVTRTALQNAASVASLLLTTEAMVAEAPKDESAAPAMPGGMGGMGDMGM.

Residues 30-33 (TLGP), lysine 51, 87-91 (DGTTT), glycine 415, 479-481 (NAA), and aspartate 495 each bind ATP. Positions 527 to 546 (DESAAPAMPGGMGGMGDMGM) are disordered. Residues 536–546 (GGMGGMGDMGM) are compositionally biased toward gly residues.

It belongs to the chaperonin (HSP60) family. In terms of assembly, forms a cylinder of 14 subunits composed of two heptameric rings stacked back-to-back. Interacts with the co-chaperonin GroES.

Its subcellular location is the cytoplasm. It catalyses the reaction ATP + H2O + a folded polypeptide = ADP + phosphate + an unfolded polypeptide.. In terms of biological role, together with its co-chaperonin GroES, plays an essential role in assisting protein folding. The GroEL-GroES system forms a nano-cage that allows encapsulation of the non-native substrate proteins and provides a physical environment optimized to promote and accelerate protein folding. This is Chaperonin GroEL from Acidovorax ebreus (strain TPSY) (Diaphorobacter sp. (strain TPSY)).